The sequence spans 784 residues: Cadherin-15 (784 aa).

Positions Met1–Ala21 are cleaved as a signal peptide. A propeptide spanning residues Val22–Arg59 is cleaved from the precursor. 5 consecutive Cadherin domains span residues Leu60–Phe151, Leu152–Phe259, Thr260–Phe374, Pro375–Pro480, and Ala481–Pro589. Residues Leu60–Ala605 are Extracellular-facing. Residues Asn106 and Asn226 are each glycosylated (N-linked (GlcNAc...) asparagine). N-linked (GlcNAc...) asparagine glycans are attached at residues Asn530, Asn537, and Asn575. A helical transmembrane segment spans residues Leu606 to Leu625. The Cytoplasmic portion of the chain corresponds to Arg626 to Gln784. The tract at residues Glu676–Gln700 is disordered.

Skeletal muscle.

It is found in the cell membrane. Its function is as follows. Cadherins are calcium-dependent cell adhesion proteins. They preferentially interact with themselves in a homophilic manner in connecting cells; cadherins may thus contribute to the sorting of heterogeneous cell types. M-cadherin is part of the myogenic program and may provide a trigger for terminal muscle differentiation. In Mus musculus (Mouse), this protein is Cadherin-15 (Cdh15).